We begin with the raw amino-acid sequence, 384 residues long: MTNLIKNVKDAFNSVLSYAPTHIVQAPGRVNLIGEHTDYNDGFVLPCAINYQTVVAAAKRDDNIVRVVSVDYGNETDEFDITQEITFQENKMWSNYIRGVVKCLIDRGYEFKGADISVSGNVPQGAGLSSSAALEVVIGQTFKELYNLNISQAEIALNGQQAENEFVGCNCGIMDQMISAEGNENHAMLLDCRSLETTAVSMPEDMSVVIINSNKKRGLVDSEYNTRREQCEEAARIFGVKALRDVTIEEFNAKAHELDEMVAKRARHVITENDRTEEAAKVLASGDMKRMAVLMAESHASMRDDFEITVSEVDTLVDIVKNVIGAEGGVRMTGGGFGGCIVALVPPMLVDEVKAAVEELYEAKTGLKESIYVCQATNGAGLVL.

Residue 35–38 (EHTD) participates in substrate binding. Residues Ser-69 and 125–131 (GAGLSSS) each bind ATP. Mg(2+) is bound by residues Ser-131 and Glu-163. The Proton acceptor role is filled by Asp-175. Substrate is bound at residue Tyr-224.

The protein belongs to the GHMP kinase family. GalK subfamily.

It is found in the cytoplasm. The enzyme catalyses alpha-D-galactose + ATP = alpha-D-galactose 1-phosphate + ADP + H(+). It participates in carbohydrate metabolism; galactose metabolism. In terms of biological role, catalyzes the transfer of the gamma-phosphate of ATP to D-galactose to form alpha-D-galactose-1-phosphate (Gal-1-P). The sequence is that of Galactokinase from Aliivibrio fischeri (strain ATCC 700601 / ES114) (Vibrio fischeri).